Here is a 398-residue protein sequence, read N- to C-terminus: Enolase (398 aa).

Gln154 is a binding site for (2R)-2-phosphoglycerate. Residue Glu196 is the Proton donor of the active site. Residues Asp232, Glu273, and Asp300 each coordinate Mg(2+). Lys325, Arg354, Ser355, and Lys376 together coordinate (2R)-2-phosphoglycerate. The active-site Proton acceptor is the Lys325.

This sequence belongs to the enolase family. The cofactor is Mg(2+).

The protein resides in the cytoplasm. Its subcellular location is the secreted. It is found in the cell surface. The enzyme catalyses (2R)-2-phosphoglycerate = phosphoenolpyruvate + H2O. The protein operates within carbohydrate degradation; glycolysis; pyruvate from D-glyceraldehyde 3-phosphate: step 4/5. Catalyzes the reversible conversion of 2-phosphoglycerate (2-PG) into phosphoenolpyruvate (PEP). It is essential for the degradation of carbohydrates via glycolysis. This Halobacterium salinarum (strain ATCC 700922 / JCM 11081 / NRC-1) (Halobacterium halobium) protein is Enolase.